Reading from the N-terminus, the 180-residue chain is Adenine phosphoribosyltransferase (180 aa).

Belongs to the purine/pyrimidine phosphoribosyltransferase family. Homodimer.

It is found in the cytoplasm. It carries out the reaction AMP + diphosphate = 5-phospho-alpha-D-ribose 1-diphosphate + adenine. It functions in the pathway purine metabolism; AMP biosynthesis via salvage pathway; AMP from adenine: step 1/1. Its function is as follows. Catalyzes a salvage reaction resulting in the formation of AMP, that is energically less costly than de novo synthesis. The protein is Adenine phosphoribosyltransferase of Mycolicibacterium smegmatis (strain ATCC 700084 / mc(2)155) (Mycobacterium smegmatis).